The following is a 140-amino-acid chain: Nucleoside diphosphate kinase (140 aa).

ATP-binding residues include Lys10, Phe58, Arg86, Thr92, Arg103, and Asn113. Catalysis depends on His116, which acts as the Pros-phosphohistidine intermediate.

It belongs to the NDK family. In terms of assembly, homotetramer. Mg(2+) serves as cofactor.

The protein localises to the cytoplasm. It carries out the reaction a 2'-deoxyribonucleoside 5'-diphosphate + ATP = a 2'-deoxyribonucleoside 5'-triphosphate + ADP. The enzyme catalyses a ribonucleoside 5'-diphosphate + ATP = a ribonucleoside 5'-triphosphate + ADP. Major role in the synthesis of nucleoside triphosphates other than ATP. The ATP gamma phosphate is transferred to the NDP beta phosphate via a ping-pong mechanism, using a phosphorylated active-site intermediate. The chain is Nucleoside diphosphate kinase from Haemophilus influenzae (strain PittEE).